The chain runs to 370 residues: Histidinol-phosphate aminotransferase (370 aa).

Residue Lys-223 is modified to N6-(pyridoxal phosphate)lysine.

It belongs to the class-II pyridoxal-phosphate-dependent aminotransferase family. Histidinol-phosphate aminotransferase subfamily. Homodimer. Pyridoxal 5'-phosphate serves as cofactor.

It catalyses the reaction L-histidinol phosphate + 2-oxoglutarate = 3-(imidazol-4-yl)-2-oxopropyl phosphate + L-glutamate. It functions in the pathway amino-acid biosynthesis; L-histidine biosynthesis; L-histidine from 5-phospho-alpha-D-ribose 1-diphosphate: step 7/9. This is Histidinol-phosphate aminotransferase from Methylobacterium sp. (strain 4-46).